We begin with the raw amino-acid sequence, 226 residues long: MEDIKHNKKPNTNNSAETKKASGANPQANHANPNNRSASVNNNSVNNNKKNSSRSSDERNKRKNEKRTKSEFEEKIVKISRISKTTKGGRTMRFSALVVVGDRKGRVGFGIAKALEVPNAIKKALKMAENNVQKIAMNKHGTLFHDVLGRSGAAKVLIKPAPSGTGIIAGGAIRAVVELAGFTDVYTKNMGKNTPINMVRATMDGITSQYTPRQIAKLRSKSLKEL.

Positions 1–71 (MEDIKHNKKP…RKNEKRTKSE (71 aa)) are disordered. Over residues 24–54 (ANPQANHANPNNRSASVNNNSVNNNKKNSSR) the composition is skewed to low complexity. The region spanning 72–135 (FEEKIVKISR…KMAENNVQKI (64 aa)) is the S5 DRBM domain.

The protein belongs to the universal ribosomal protein uS5 family. In terms of assembly, part of the 30S ribosomal subunit. Contacts proteins S4 and S8.

In terms of biological role, with S4 and S12 plays an important role in translational accuracy. Functionally, located at the back of the 30S subunit body where it stabilizes the conformation of the head with respect to the body. This chain is Small ribosomal subunit protein uS5, found in Mycoplasmoides gallisepticum (strain R(low / passage 15 / clone 2)) (Mycoplasma gallisepticum).